The chain runs to 133 residues: Large ribosomal subunit protein uL14 (133 aa).

It belongs to the universal ribosomal protein uL14 family. In terms of assembly, part of the 50S ribosomal subunit. Forms a cluster with proteins L3 and L24e, part of which may contact the 16S rRNA in 2 intersubunit bridges.

In terms of biological role, binds to 23S rRNA. Forms part of two intersubunit bridges in the 70S ribosome. The sequence is that of Large ribosomal subunit protein uL14 from Methanopyrus kandleri (strain AV19 / DSM 6324 / JCM 9639 / NBRC 100938).